Consider the following 276-residue polypeptide: Outer membrane lipoprotein 2 (276 aa).

Residues 1–19 form the signal peptide; sequence MNFKKLLGVALVSALALTA. The N-palmitoyl cysteine moiety is linked to residue cysteine 20. The S-diacylglycerol cysteine moiety is linked to residue cysteine 20.

Belongs to the NlpA lipoprotein family.

It localises to the cell outer membrane. This is Outer membrane lipoprotein 2 (plpB) from Mannheimia haemolytica (Pasteurella haemolytica).